A 98-amino-acid chain; its full sequence is UPF0251 protein Sputcn32_0687 (98 aa).

The protein belongs to the UPF0251 family.

The protein is UPF0251 protein Sputcn32_0687 of Shewanella putrefaciens (strain CN-32 / ATCC BAA-453).